The sequence spans 635 residues: Chaperone protein HtpG (635 aa).

An a; substrate-binding region spans residues 1-346 (MSQTTTTSAS…SADLPLNVSR (346 aa)). Residues 347 to 563 (EILQESRDVR…QNELSPHLLR (217 aa)) are b. The interval 564 to 635 (MLKAAGQEAP…KRLNGLLLKA (72 aa)) is c.

It belongs to the heat shock protein 90 family. As to quaternary structure, homodimer.

Its subcellular location is the cytoplasm. In terms of biological role, molecular chaperone. Has ATPase activity. This is Chaperone protein HtpG from Bordetella pertussis (strain Tohama I / ATCC BAA-589 / NCTC 13251).